Reading from the N-terminus, the 198-residue chain is Nucleoid occlusion factor SlmA (198 aa).

Residues 9-70 enclose the HTH tetR-type domain; sequence RNRREEILQA…SLIEFIEDTL (62 aa). A DNA-binding region (H-T-H motif) is located at residues 33 to 52; it reads TTAKLAANVGVSEAALYRHF. Residues 117–144 are a coiled coil; sequence EQDRLQGRINQLFERIEAQLRQVLKERR.

Belongs to the nucleoid occlusion factor SlmA family. As to quaternary structure, homodimer. Interacts with FtsZ.

It is found in the cytoplasm. Its subcellular location is the nucleoid. Functionally, required for nucleoid occlusion (NO) phenomenon, which prevents Z-ring formation and cell division over the nucleoid. Acts as a DNA-associated cell division inhibitor that binds simultaneously chromosomal DNA and FtsZ, and disrupts the assembly of FtsZ polymers. SlmA-DNA-binding sequences (SBS) are dispersed on non-Ter regions of the chromosome, preventing FtsZ polymerization at these regions. In Edwardsiella ictaluri (strain 93-146), this protein is Nucleoid occlusion factor SlmA.